An 848-amino-acid chain; its full sequence is MSSGANITYASRKRRKPVQKTVKPIPAEGIKSNPSKRHRDRLNTELDRLASLLPFPQDVINKLDKLSVLRLSVSYLRAKSFFDVALKSTPADRNGGQDQCRAQIRDWQDLQEGEFLLQALNGFVLVVTADALVFYASSTIQDYLGFQQSDVIHQSVYELIHTEDRAEFQRQLHWALNPDSAQGVDEAHGPPQAAVYYTPDQLPPENASFMERCFRCRLRCLLDNSSGFLAMNFQGRLKYLHGQNKKGKDGALLPPQLALFAIATPLQPPSILEIRTKNFIFRTKHKLDFTPIGCDAKGQLILGYTEVELCTRGSGYQFIHAADMLHCAESHIRMIKTGESGMTVFRLFAKHSRWRWVQSNARLIYRNGRPDYIIATQRPLTDEEGREHLQKRSTSLPFMFATGEAVLYEISSPFSPIMDPLPIRTKSNTSRKDWAPQSTPSKDSFHPSSLMSALIQQDESIYLCPPSSPAPLDSHFLMGSVSKCGSWQDSFAAAGSEAALKHEQIGHAQDVNLALSGGPSELFPDNKNNDLYNIMRNLGIDFEDIRSMQNEEFFRTDSTAAGEVDFKDIDITDEILTYVQDSLNNSTLMNSACQQQPVTQHLSCMLQERLQLEQQQQLQQPPPQALEPQQQLCQMVCPQQDLGPKHTQINGTFASWNPTPPVSFNCPQQELKHYQLFSSLQGTAQEFPYKPEVDSVPYTQNFAPCNQPLLPEHSKSVQLDFPGRDFEPSLHPTTSNLDFVSCLQVPENQSHGINSQSTMVSPQAYYAGAMSMYQCQPGPQRTPVDQTQYSSEIPGSQAFLSKVQSRGIFNETYSSDLSSIGHAAQTTGHLHHLAEARPLPDITPGGFL.

A propeptide spanning residues 1–9 (MSSGANITY) is cleaved from the precursor. The tract at residues 1-38 (MSSGANITYASRKRRKPVQKTVKPIPAEGIKSNPSKRH) is disordered. 2 consecutive short sequence motifs (nuclear localization signal) follow at residues 12-15 (RKRR) and 36-41 (KRHRDR). The 54-residue stretch at 26–79 (PAEGIKSNPSKRHRDRLNTELDRLASLLPFPQDVINKLDKLSVLRLSVSYLRAK) folds into the bHLH domain. Residues 37 to 65 (RHRDRLNTELDRLASLLPFPQDVINKLDK) are DNA-binding. Required for maintaining the overall integrity of the AHR:ARNT heterodimer and its transcriptional activity stretches follow at residues 49–81 (LASL…AKSF), 116–124 (LLQALNGFV), and 260–262 (FAI). The short motif at 63 to 71 (LDKLSVLRL) is the Nuclear export signal element. In terms of domain architecture, PAS 1 spans 116 to 179 (LLQALNGFVL…RQLHWALNPD (64 aa)). Residues 269-336 (PSILEIRTKN…CAESHIRMIK (68 aa)) enclose the PAS 2 domain. Residues 342–380 (MTVFRLFAKHSRWRWVQSNARLIYRNGRPDYIIATQRPL) enclose the PAC domain. The tract at residues 421 to 449 (LPIRTKSNTSRKDWAPQSTPSKDSFHPSS) is disordered. Residues 436–449 (PQSTPSKDSFHPSS) are compositionally biased toward polar residues.

As to quaternary structure, homodimer. Heterodimer; efficient DNA binding requires dimerization with another bHLH protein. Interacts with ARNT; the heterodimer ARNT:AHR binds to core DNA sequence 5'-TGCGTG-3' within the dioxin response element (DRE) of target gene promoters and activates their transcription. Binds MYBBP1A. Interacts with coactivators including SRC-1, RIP140 and NOCA7, and with the corepressor SMRT. Interacts with NEDD8 and IVNS1ABP. Interacts with BMAL1. Interacts with HSP90AB1. Interacts with TIPARP; leading to mono-ADP-ribosylation of AHR and subsequent inhibition of AHR. Mono-ADP-ribosylated, leading to inhibit transcription activator activity of AHR. As to expression, expressed in all tissues tested including brain, heart, kidney, liver, lung, muscle, ovary, skin, spleen and thymus.

Its subcellular location is the cytoplasm. It localises to the nucleus. Its function is as follows. Ligand-activated transcription factor that enables cells to adapt to changing conditions by sensing compounds from the environment, diet, microbiome and cellular metabolism, and which plays important roles in development, immunity and cancer. Upon ligand binding, translocates into the nucleus, where it heterodimerizes with ARNT and induces transcription by binding to xenobiotic response elements (XRE). Regulates a variety of biological processes, including angiogenesis, hematopoiesis, drug and lipid metabolism, cell motility and immune modulation. Xenobiotics can act as ligands: upon xenobiotic-binding, activates the expression of multiple phase I and II xenobiotic chemical metabolizing enzyme genes (such as the CYP1A1 gene). Mediates biochemical and toxic effects of halogenated aromatic hydrocarbons. Next to xenobiotics, natural ligands derived from plants, microbiota, and endogenous metabolism are potent AHR agonists. Tryptophan (Trp) derivatives constitute an important class of endogenous AHR ligands. Acts as a negative regulator of anti-tumor immunity: indoles and kynurenic acid generated by Trp catabolism act as ligand and activate AHR, thereby promoting AHR-driven cancer cell motility and suppressing adaptive immunity. Regulates the circadian clock by inhibiting the basal and circadian expression of the core circadian component PER1. Inhibits PER1 by repressing the CLOCK-BMAL1 heterodimer mediated transcriptional activation of PER1. The heterodimer ARNT:AHR binds to core DNA sequence 5'-TGCGTG-3' within the dioxin response element (DRE) of target gene promoters and activates their transcription. The polypeptide is Aryl hydrocarbon receptor (Ahr) (Mus musculus (Mouse)).